Here is a 414-residue protein sequence, read N- to C-terminus: Serine/threonine transporter SstT (414 aa).

Topologically, residues 2-15 (TTQRSPGLFRRLAH) are cytoplasmic. Residues 16-36 (GSLVKQILVGLVLGILLAWIS) traverse the membrane as a helical segment. Residues 37–45 (KPAAEAVGL) are Periplasmic-facing. The helical transmembrane segment at 46–66 (LGTLFVGALKAVAPILVLMLV) threads the bilayer. At 67 to 83 (MASIANHQHGQKTNIRP) the chain is on the cytoplasmic side. Residues 84–104 (ILFLYLLGTFSAALAAVVFSF) form a helical membrane-spanning segment. At 105 to 142 (AFPSTLHLSSSAGDISPPSGIVEVMRGLVMSMVSNPID) the chain is on the periplasmic side. Residues 143-163 (ALLKGNYIGILVWAIGLGFAL) form a helical membrane-spanning segment. Residues 164–179 (RHGNETTKNLVNDMSN) lie on the Cytoplasmic side of the membrane. The chain crosses the membrane as a helical span at residues 180–200 (AVTFMVKLVIRFAPFGIFGLV). Residues 201-217 (SSTLATTGFSTLWGYAQ) lie on the Periplasmic side of the membrane. Residues 218-238 (LLVVLVGCMLLVALVVNPLLV) form a helical membrane-spanning segment. Over 239 to 299 (WWKIRRNPFP…VSIPLGATIN (61 aa)) the chain is Cytoplasmic. A helical transmembrane segment spans residues 300 to 320 (MAGAAITITVLTLAAVNTLGI). Residues 321-331 (PVDLPTALLLS) lie on the Periplasmic side of the membrane. A helical membrane pass occupies residues 332-352 (VVASLCACGASGVAGGSLLLI). The Cytoplasmic portion of the chain corresponds to 353 to 414 (PLACNMFGIS…DRLANSALRN (62 aa)).

Belongs to the dicarboxylate/amino acid:cation symporter (DAACS) (TC 2.A.23) family.

It localises to the cell inner membrane. It catalyses the reaction L-serine(in) + Na(+)(in) = L-serine(out) + Na(+)(out). It carries out the reaction L-threonine(in) + Na(+)(in) = L-threonine(out) + Na(+)(out). Functionally, involved in the import of serine and threonine into the cell, with the concomitant import of sodium (symport system). The protein is Serine/threonine transporter SstT of Shigella flexneri.